A 443-amino-acid polypeptide reads, in one-letter code: Leucine/methionine racemase (443 aa).

Pyridoxal 5'-phosphate-binding positions include 110-111 (GS) and Gln-247. Lys-273 is subject to N6-(pyridoxal phosphate)lysine. A pyridoxal 5'-phosphate-binding site is contributed by Thr-302.

Belongs to the class-III pyridoxal-phosphate-dependent aminotransferase family. The cofactor is pyridoxal 5'-phosphate.

It carries out the reaction L-leucine = D-leucine. It catalyses the reaction L-methionine = D-methionine. With respect to regulation, activity is strongly inhibited by several metal ions, including Co(2+), Zn(2+), Ni(2+), Cu(2+) and Fe(3+), and nonsubstrate amino acids such as L-arginine and L-lysine. Activity is completely abolished in the presence of hydroxylamine, an inhibitor of pyridoxal phosphate-dependent enzymes. Its function is as follows. Amino acid racemase with moderate substrate specificity. Is primarily active toward leucine, which is the preferred substrate, and methionine. Also exhibits lower levels of activity toward phenylalanine, alanine and serine. The chain is Leucine/methionine racemase from Thermococcus litoralis (strain ATCC 51850 / DSM 5473 / JCM 8560 / NS-C).